A 438-amino-acid chain; its full sequence is Enolase (438 aa).

Residue Gln-174 participates in (2R)-2-phosphoglycerate binding. Glu-216 acts as the Proton donor in catalysis. Residues Asp-253, Glu-297, and Asp-324 each coordinate Mg(2+). Residues Lys-349, Arg-378, Ser-379, and Lys-400 each contribute to the (2R)-2-phosphoglycerate site. Lys-349 acts as the Proton acceptor in catalysis.

It belongs to the enolase family. Component of the RNA degradosome, a multiprotein complex involved in RNA processing and mRNA degradation. Mg(2+) is required as a cofactor.

It is found in the cytoplasm. The protein localises to the secreted. It localises to the cell surface. The enzyme catalyses (2R)-2-phosphoglycerate = phosphoenolpyruvate + H2O. It functions in the pathway carbohydrate degradation; glycolysis; pyruvate from D-glyceraldehyde 3-phosphate: step 4/5. Its function is as follows. Catalyzes the reversible conversion of 2-phosphoglycerate (2-PG) into phosphoenolpyruvate (PEP). It is essential for the degradation of carbohydrates via glycolysis. The polypeptide is Enolase (Psychrobacter sp. (strain PRwf-1)).